We begin with the raw amino-acid sequence, 365 residues long: Chorismate synthase (365 aa).

Basic and acidic residues predominate over residues 41–51 (IQKELDRRRPG). Residues 41 to 62 (IQKELDRRRPGQSEVSTPRSEA) are disordered. Arg-48 is a binding site for NADP(+). FMN-binding positions include 125 to 127 (RSS), Gly-285, 300 to 304 (KPTPS), and Arg-327.

Belongs to the chorismate synthase family. FMNH2 serves as cofactor.

The enzyme catalyses 5-O-(1-carboxyvinyl)-3-phosphoshikimate = chorismate + phosphate. The protein operates within metabolic intermediate biosynthesis; chorismate biosynthesis; chorismate from D-erythrose 4-phosphate and phosphoenolpyruvate: step 7/7. Catalyzes the anti-1,4-elimination of the C-3 phosphate and the C-6 proR hydrogen from 5-enolpyruvylshikimate-3-phosphate (EPSP) to yield chorismate, which is the branch point compound that serves as the starting substrate for the three terminal pathways of aromatic amino acid biosynthesis. This reaction introduces a second double bond into the aromatic ring system. The sequence is that of Chorismate synthase from Methanosarcina acetivorans (strain ATCC 35395 / DSM 2834 / JCM 12185 / C2A).